The chain runs to 92 residues: Small ribosomal subunit protein uS19 (92 aa).

This sequence belongs to the universal ribosomal protein uS19 family.

Its function is as follows. Protein S19 forms a complex with S13 that binds strongly to the 16S ribosomal RNA. This chain is Small ribosomal subunit protein uS19, found in Methylobacterium nodulans (strain LMG 21967 / CNCM I-2342 / ORS 2060).